A 615-amino-acid chain; its full sequence is Crinkler effector protein 15 (615 aa).

Positions 1–17 (MVKLVCAIVGVAGSAFP) are cleaved as a signal peptide. Residues 18–54 (VDIDASQLVGDLKKAIKAENAMTFTGDAKDLQLFLAK) form an LQLFLAK domain region. Residues 55–136 (QPVDDESGKE…NMELPSSEQI (82 aa)) are DWL domain. Residues 137-143 (HVLVVVP) carry the HVLVXXP motif motif. N-linked (GlcNAc...) asparagine glycosylation is present at N531.

The protein belongs to the Crinkler effector family.

The protein localises to the secreted. The protein resides in the host nucleus. Its function is as follows. Secreted effector that elicits necrosis in host plants, a characteristic of plant innate immunity. This is Crinkler effector protein 15 from Phytophthora infestans (Potato late blight agent).